A 78-amino-acid polypeptide reads, in one-letter code: Acyl carrier protein (78 aa).

Positions 2-77 (SDTADRVQKI…DATKYIEEHK (76 aa)) constitute a Carrier domain. Serine 37 carries the O-(pantetheine 4'-phosphoryl)serine modification.

Belongs to the acyl carrier protein (ACP) family. In terms of processing, 4'-phosphopantetheine is transferred from CoA to a specific serine of apo-ACP by AcpS. This modification is essential for activity because fatty acids are bound in thioester linkage to the sulfhydryl of the prosthetic group.

Its subcellular location is the cytoplasm. It functions in the pathway lipid metabolism; fatty acid biosynthesis. Functionally, carrier of the growing fatty acid chain in fatty acid biosynthesis. In Erythrobacter litoralis (strain HTCC2594), this protein is Acyl carrier protein.